Consider the following 249-residue polypeptide: Chitooligosaccharide deacetylase (249 aa).

Mg(2+)-binding residues include histidine 61 and histidine 125.

The protein belongs to the YdjC deacetylase family. ChbG subfamily. Homodimer. Mg(2+) serves as cofactor.

The protein localises to the cytoplasm. The catalysed reaction is N,N'-diacetylchitobiose + H2O = N-acetyl-beta-D-glucosaminyl-(1-&gt;4)-D-glucosamine + acetate. The enzyme catalyses diacetylchitobiose-6'-phosphate + H2O = N'-monoacetylchitobiose-6'-phosphate + acetate. The protein operates within glycan degradation; chitin degradation. Its function is as follows. Involved in the degradation of chitin. ChbG is essential for growth on the acetylated chitooligosaccharides chitobiose and chitotriose but is dispensable for growth on cellobiose and chitosan dimer, the deacetylated form of chitobiose. Deacetylation of chitobiose-6-P and chitotriose-6-P is necessary for both the activation of the chb promoter by the regulatory protein ChbR and the hydrolysis of phosphorylated beta-glucosides by the phospho-beta-glucosidase ChbF. Catalyzes the removal of only one acetyl group from chitobiose-6-P to yield monoacetylchitobiose-6-P, the inducer of ChbR and the substrate of ChbF. This is Chitooligosaccharide deacetylase from Escherichia coli O7:K1 (strain IAI39 / ExPEC).